Here is a 329-residue protein sequence, read N- to C-terminus: 1-phosphatidylinositol phosphodiesterase (329 aa).

Positions 1–31 (MSNKKLILKLFICSTIFITFVFALHDKRVVA) are cleaved as a signal peptide. The PI-PLC X-box domain occupies 51–194 (NIPLARISIP…ARGKIVLLKR (144 aa)). Catalysis depends on H63, which acts as the Proton acceptor. H113 serves as the catalytic Proton donor.

It is found in the secreted. The catalysed reaction is a 1,2-diacyl-sn-glycero-3-phospho-(1D-myo-inositol) = 1D-myo-inositol 1,2-cyclic phosphate + a 1,2-diacyl-sn-glycerol. Functionally, cleaves glycosylphosphatidylinositol (GPI) and phosphatidylinositol (PI) anchors but not PI phosphates. The polypeptide is 1-phosphatidylinositol phosphodiesterase (Bacillus thuringiensis).